Reading from the N-terminus, the 696-residue chain is UvrABC system protein B (696 aa).

Residues 46–433 form the Helicase ATP-binding domain; the sequence is EGVEDGLSFQ…SGQTAEQVVR (388 aa). Position 59–66 (59–66) interacts with ATP; it reads GVTGSGKT. The Beta-hairpin motif lies at 112–135; the sequence is YYDYYQPEAYVPQRDLFIEKDSSI. The 167-residue stretch at 450 to 616 folds into the Helicase C-terminal domain; sequence QVDDVLSEIT…GVVKRIKDII (167 aa). The 36-residue stretch at 647–682 folds into the UVR domain; sequence AKEIKRLEKQMADYAKNLEFEKAAQTRDQLALLRER.

It belongs to the UvrB family. In terms of assembly, forms a heterotetramer with UvrA during the search for lesions. Interacts with UvrC in an incision complex.

The protein localises to the cytoplasm. In terms of biological role, the UvrABC repair system catalyzes the recognition and processing of DNA lesions. A damage recognition complex composed of 2 UvrA and 2 UvrB subunits scans DNA for abnormalities. Upon binding of the UvrA(2)B(2) complex to a putative damaged site, the DNA wraps around one UvrB monomer. DNA wrap is dependent on ATP binding by UvrB and probably causes local melting of the DNA helix, facilitating insertion of UvrB beta-hairpin between the DNA strands. Then UvrB probes one DNA strand for the presence of a lesion. If a lesion is found the UvrA subunits dissociate and the UvrB-DNA preincision complex is formed. This complex is subsequently bound by UvrC and the second UvrB is released. If no lesion is found, the DNA wraps around the other UvrB subunit that will check the other stand for damage. This Burkholderia mallei (strain ATCC 23344) protein is UvrABC system protein B.